Consider the following 82-residue polypeptide: Putative antitoxin RelB1 (82 aa).

Its function is as follows. Antitoxin component of a type II toxin-antitoxin (TA) system. Its cognate toxin is RelE1 (Potential). The polypeptide is Putative antitoxin RelB1 (relB1) (Methanocaldococcus jannaschii (strain ATCC 43067 / DSM 2661 / JAL-1 / JCM 10045 / NBRC 100440) (Methanococcus jannaschii)).